A 349-amino-acid chain; its full sequence is Twinfilin-2 (349 aa).

ADF-H domains follow at residues 4–139 (QTGI…KHVS) and 177–313 (GLAF…DEVH). The tract at residues 324–349 (AKPKGPVGKRGQKRLIKGPGENGEDS) is disordered.

It belongs to the actin-binding proteins ADF family. Twinfilin subfamily. As to quaternary structure, interacts with G-actin; ADP-actin form and capping protein (CP).

The protein localises to the cytoplasm. Its subcellular location is the cytoskeleton. The protein resides in the perinuclear region. Actin-binding protein involved in motile and morphological processes. Inhibits actin polymerization, likely by sequestering G-actin. This chain is Twinfilin-2 (TWF2), found in Gallus gallus (Chicken).